The following is a 233-amino-acid chain: Probable translation initiation factor, mitochondrial (233 aa).

Residues 1–39 constitute a mitochondrion transit peptide; sequence MNSYLQFPHRKLFIQFSYSLTSVFRKCQSRTFMNSQFAS.

The protein belongs to the IF-3 family.

Its subcellular location is the mitochondrion. Its function is as follows. May be involved in mitochondrial translation initiation. The polypeptide is Probable translation initiation factor, mitochondrial (Schizosaccharomyces pombe (strain 972 / ATCC 24843) (Fission yeast)).